We begin with the raw amino-acid sequence, 233 residues long: Type IV secretion system protein PtlE homolog (233 aa).

Residues 42–62 (VAWAALAVTALSLIAIATMLP) traverse the membrane as a helical segment.

It belongs to the virB8 family.

It is found in the cell inner membrane. This is Type IV secretion system protein PtlE homolog (ptlE) from Bordetella parapertussis (strain 12822 / ATCC BAA-587 / NCTC 13253).